The chain runs to 257 residues: Aspartate/glutamate leucyltransferase (257 aa).

This sequence belongs to the R-transferase family. Bpt subfamily.

The protein resides in the cytoplasm. The enzyme catalyses N-terminal L-glutamyl-[protein] + L-leucyl-tRNA(Leu) = N-terminal L-leucyl-L-glutamyl-[protein] + tRNA(Leu) + H(+). It carries out the reaction N-terminal L-aspartyl-[protein] + L-leucyl-tRNA(Leu) = N-terminal L-leucyl-L-aspartyl-[protein] + tRNA(Leu) + H(+). In terms of biological role, functions in the N-end rule pathway of protein degradation where it conjugates Leu from its aminoacyl-tRNA to the N-termini of proteins containing an N-terminal aspartate or glutamate. This is Aspartate/glutamate leucyltransferase from Leptospira interrogans serogroup Icterohaemorrhagiae serovar copenhageni (strain Fiocruz L1-130).